The chain runs to 120 residues: Dynein 11 kDa light chain, flagellar outer arm (120 aa).

It belongs to the dynein light chain family. In terms of assembly, consists of at least 3 heavy chains (alpha, beta and gamma), 2 intermediate chains and 8 light chains.

Its subcellular location is the cytoplasm. It is found in the cytoskeleton. The protein localises to the flagellum axoneme. The chain is Dynein 11 kDa light chain, flagellar outer arm from Chlamydomonas reinhardtii (Chlamydomonas smithii).